A 378-amino-acid chain; its full sequence is Chaperone protein DnaJ (378 aa).

In terms of domain architecture, J spans 6–70; the sequence is DYYDVLGVSR…QKRQQYDQFG (65 aa). The CR-type zinc-finger motif lies at 137–219; it reads GKTSEISYSR…CHGKGVKTQK (83 aa). The Zn(2+) site is built by Cys-150, Cys-153, Cys-167, Cys-170, Cys-193, Cys-196, Cys-207, and Cys-210. 4 CXXCXGXG motif repeats span residues 150 to 157, 167 to 174, 193 to 200, and 207 to 214; these read CEVCKGSG, CDKCGGSG, CDKCTGSG, and CHNCHGKG.

This sequence belongs to the DnaJ family. As to quaternary structure, homodimer. The cofactor is Zn(2+).

Its subcellular location is the cytoplasm. In terms of biological role, participates actively in the response to hyperosmotic and heat shock by preventing the aggregation of stress-denatured proteins and by disaggregating proteins, also in an autonomous, DnaK-independent fashion. Unfolded proteins bind initially to DnaJ; upon interaction with the DnaJ-bound protein, DnaK hydrolyzes its bound ATP, resulting in the formation of a stable complex. GrpE releases ADP from DnaK; ATP binding to DnaK triggers the release of the substrate protein, thus completing the reaction cycle. Several rounds of ATP-dependent interactions between DnaJ, DnaK and GrpE are required for fully efficient folding. Also involved, together with DnaK and GrpE, in the DNA replication of plasmids through activation of initiation proteins. In Lactobacillus delbrueckii subsp. bulgaricus (strain ATCC 11842 / DSM 20081 / BCRC 10696 / JCM 1002 / NBRC 13953 / NCIMB 11778 / NCTC 12712 / WDCM 00102 / Lb 14), this protein is Chaperone protein DnaJ.